Reading from the N-terminus, the 850-residue chain is Elongation factor 2 (850 aa).

One can recognise a tr-type G domain in the interval 17-351; the sequence is KNIRNISVIA…QIALKLPSPL (335 aa). Residues 26-33, 159-162, and 213-215 each bind GTP; these read AHVDHGKS, NKLD, and SGL. A Diphthamide modification is found at His707.

The protein belongs to the TRAFAC class translation factor GTPase superfamily. Classic translation factor GTPase family. EF-G/EF-2 subfamily.

The protein resides in the cytoplasm. The enzyme catalyses GTP + H2O = GDP + phosphate + H(+). Its pathway is protein biosynthesis; polypeptide chain elongation. Catalyzes the GTP-dependent ribosomal translocation step during translation elongation. During this step, the ribosome changes from the pre-translocational (PRE) to the post-translocational (POST) state as the newly formed A-site-bound peptidyl-tRNA and P-site-bound deacylated tRNA move to the P and E sites, respectively. Catalyzes the coordinated movement of the two tRNA molecules, the mRNA and conformational changes in the ribosome. This chain is Elongation factor 2 (EFT1), found in Encephalitozoon cuniculi (strain GB-M1) (Microsporidian parasite).